A 233-amino-acid chain; its full sequence is Cytidylate kinase (233 aa).

Residue 15–23 coordinates ATP; sequence GPSGAGKST. Residues 183–201 show a composition bias toward basic and acidic residues; the sequence is RRDEQDSGREHAPLRRADD. The disordered stretch occupies residues 183–202; the sequence is RRDEQDSGREHAPLRRADDA.

It belongs to the cytidylate kinase family. Type 1 subfamily.

The protein localises to the cytoplasm. It carries out the reaction CMP + ATP = CDP + ADP. The enzyme catalyses dCMP + ATP = dCDP + ADP. The protein is Cytidylate kinase of Geobacter sulfurreducens (strain ATCC 51573 / DSM 12127 / PCA).